The chain runs to 369 residues: Type 2 DNA topoisomerase 6 subunit A (369 aa).

Residues 11–149 (QRDLLAREKL…FHMRPEEDGA (139 aa)) form the Topo IIA-type catalytic domain. Residue tyrosine 106 is the O-(5'-phospho-DNA)-tyrosine intermediate of the active site. Mg(2+)-binding residues include glutamate 202 and aspartate 254.

It belongs to the TOP6A family. In terms of assembly, homodimer. Heterotetramer of two Top6A and two Top6B chains. Mg(2+) serves as cofactor.

It carries out the reaction ATP-dependent breakage, passage and rejoining of double-stranded DNA.. In terms of biological role, relaxes both positive and negative superturns and exhibits a strong decatenase activity. This is Type 2 DNA topoisomerase 6 subunit A from Methanosarcina barkeri (strain Fusaro / DSM 804).